We begin with the raw amino-acid sequence, 607 residues long: Chaperone protein DnaK (607 aa).

T174 carries the phosphothreonine; by autocatalysis modification. Residues 579–592 show a composition bias toward low complexity; sequence AQAQAQQQAGANAG. The disordered stretch occupies residues 579 to 607; sequence AQAQAQQQAGANAGSDKKDEDVAEAEVVD.

This sequence belongs to the heat shock protein 70 family.

Acts as a chaperone. The chain is Chaperone protein DnaK from Fusobacterium nucleatum subsp. nucleatum (strain ATCC 25586 / DSM 15643 / BCRC 10681 / CIP 101130 / JCM 8532 / KCTC 2640 / LMG 13131 / VPI 4355).